Consider the following 410-residue polypeptide: Transcription factor SPN1 (410 aa).

The disordered stretch occupies residues 1 to 132; the sequence is MSTADQEQPK…SRQELEEKLD (132 aa). Thr-15 bears the Phosphothreonine mark. The span at 20–52 shows a compositional bias: polar residues; it reads TASSQKSTINAENENTKQNQSMEPQETSKGTSN. Ser-23 carries the phosphoserine; by ATM or ATR modification. At Ser-40 the chain carries Phosphoserine. Positions 53-65 are enriched in basic and acidic residues; it reads DTKDPDNGEKNEE. Residue Ser-85 is modified to Phosphoserine. Residue Thr-86 is modified to Phosphothreonine. At Ser-89 the chain carries Phosphoserine. Residues 219-296 enclose the TFIIS N-terminal domain; the sequence is QSVRIWLEPL…AEWTRPIIGA (78 aa). Residues 318-346 are disordered; it reads KSVMDSAKNRKKKSKSGEDPTSRGSSVQT.

The protein belongs to the IWS1 family. In terms of assembly, interacts with ABD1, RBP1, SPT5 and SPT6.

The protein localises to the nucleus. Its function is as follows. Transcription factor involved in RNA polymerase II transcription regulation. May function in both SPT15/TBP post-recruitment and recruitment steps of transcription. The polypeptide is Transcription factor SPN1 (SPN1) (Saccharomyces cerevisiae (strain ATCC 204508 / S288c) (Baker's yeast)).